The sequence spans 345 residues: Transcriptional activator hacA (345 aa).

A disordered region spans residues 1–106 (MSCDMEKTMS…AQTSRERKRL (106 aa)). The segment covering 30–40 (PADTSLNSADV) has biased composition (polar residues). Composition is skewed to basic and acidic residues over residues 41–51 (KTQEVKPEEKK) and 77–91 (KTED…ERVL). In terms of domain architecture, bZIP spans 83-146 (EQRRIERVLR…NRLSQQLAQL (64 aa)). The segment at 85–138 (RRIERVLRNRAAAQTSRERKRLEMEKLENEKIQMEQQNQFLLQRLSQMEAENNR) is basic motif. Positions 139–146 (LSQQLAQL) are leucine-zipper. Positions 186-210 (RIPFPTPSLSDYSPTLKPSTLAESS) are disordered. Residues 192-210 (PSLSDYSPTLKPSTLAESS) are compositionally biased toward polar residues.

This sequence belongs to the bZIP family. In terms of assembly, homodimer.

The protein resides in the nucleus. Transcriptional activator involved in the unfolded protein response (UPR) pathway. Recognizes and binds to the UPR element (UPRE) in the promoter of UPR-regulated genes. Increases the synthesis of endoplasmic reticulum-resident proteins required for protein folding as well as components of the secretory pathway. The sequence is that of Transcriptional activator hacA (hacA) from Aspergillus oryzae (strain ATCC 42149 / RIB 40) (Yellow koji mold).